The primary structure comprises 109 residues: Lipoprotein BsmA (109 aa).

Positions 1-24 are cleaved as a signal peptide; it reads MVSRKRNSVIYRFASLLLVLMLSA. Cysteine 25 is lipidated: N-palmitoyl cysteine. Cysteine 25 carries S-diacylglycerol cysteine lipidation.

Belongs to the BhsA/McbA family.

The protein resides in the cell membrane. Involved in protection of biofilms against oxidative stress. The polypeptide is Lipoprotein BsmA (bsmA) (Escherichia coli (strain K12)).